Here is a 736-residue protein sequence, read N- to C-terminus: MNVTTRENGGLRQRDLDALARAEHADPFAVLGPHGDGAGGQVVRAFLPNALKVRIQARDDGRVLAEMEQGSLPGLFSAHLDKAQPYQLHIVWAGGEQVTEDPYSFGPQLGDMDLHLFAEGNHRDLSGRFGAQPTQVDGIDGVCFSVWAPNARRVSVVGDFNNWDGRRHPMRLRHGAGVWELFIPRLGVGETYKFEVLGKDGILPLKADPLARATELPPSTASKVAGELSHAWQDHDWMAQRAQRHAYNAPLSIYELHPGSWRCELDEAGEIGRFYNWRELAERLVPYVQELGFTHIELLPIMEHPFGGSWGYQPLSMFAPTSRYGSAEDFAAFIDACHQGGIGVLLDWVPAHFPTDEHGLARFDGTALYEYDNPLEGYHQDWNTLIYNLGRNEVRGFMMASALHWLKHFHIDGLRVDAVASMLYRDYSRKAGEWVPNRHGGRENLEAIDFIRHLNGVAAHEAPGALIIAEESTAWPGVSQPTQQGGLGFAYKWNMGWMHDTLHYIQNDPVHRTYHHNEMSFGLIYAYSEHFILPISHDEVVHGKHSLIDKMPGDRWQKFANLRAYLTFMWAHPGKKLLFMGCEFGQWREWNHDAELDWYLLQYPEHQGVQRLVGDLNRLYREEPALHEQDCQPQGFQWLIGDDAQNSVYAWLRWSSSGEPVLVVANFTPVPREGYRIGVPFGERWQELLNSDAELYAGSNVGNLGAVASDEVASHGQPLSLALNLPPLGVLIMKPA.

Asp-417 serves as the catalytic Nucleophile. The Proton donor role is filled by Glu-470.

The protein belongs to the glycosyl hydrolase 13 family. GlgB subfamily. In terms of assembly, monomer.

It catalyses the reaction Transfers a segment of a (1-&gt;4)-alpha-D-glucan chain to a primary hydroxy group in a similar glucan chain.. The protein operates within glycan biosynthesis; glycogen biosynthesis. Catalyzes the formation of the alpha-1,6-glucosidic linkages in glycogen by scission of a 1,4-alpha-linked oligosaccharide from growing alpha-1,4-glucan chains and the subsequent attachment of the oligosaccharide to the alpha-1,6 position. In Pseudomonas putida (strain ATCC 47054 / DSM 6125 / CFBP 8728 / NCIMB 11950 / KT2440), this protein is 1,4-alpha-glucan branching enzyme GlgB.